Consider the following 210-residue polypeptide: Putative cutinase (210 aa).

Residues 26–38 are compositionally biased toward basic and acidic residues; that stretch reads DSERLPLKRDEPG. The segment at 26-58 is disordered; that stretch reads DSERLPLKRDEPGSRSMRSTFIPSSQCSNLSSA. Over residues 49 to 58 the composition is skewed to low complexity; sequence SSQCSNLSSA.

It carries out the reaction cutin + H2O = cutin monomers.. The sequence is that of Putative cutinase from Phytophthora capsici.